Here is a 311-residue protein sequence, read N- to C-terminus: Lipid A biosynthesis acyltransferase (311 aa).

The chain crosses the membrane as a helical span at residues 19 to 39; that stretch reads WLFWLGVAIWRSILCLPYPIL. An HXXXXD motif motif is present at residues 134 to 139; that stretch reads HFLTLE.

This sequence belongs to the LpxL/LpxM/LpxP family.

The protein resides in the cell inner membrane. The enzyme catalyses an alpha-Kdo-(2-&gt;4)-alpha-Kdo-(2-&gt;6)-lipid IVA + a fatty acyl-[ACP] = an alpha-Kdo-(2-&gt;4)-alpha-Kdo-(2-&gt;6)-(acyl)-lipid IVA + holo-[ACP]. It participates in glycolipid biosynthesis; KDO(2)-lipid A biosynthesis; KDO(2)-lipid A from CMP-3-deoxy-D-manno-octulosonate and lipid IV(A): step 3/4. Its pathway is bacterial outer membrane biogenesis; lipopolysaccharide biosynthesis. Functionally, catalyzes the transfer of an acyl chain from an acyl-[acyl-carrier-protein] (ACP) to a Kdo(2)-lipid IV(A) to form a Kdo(2)-(acyl)-lipid IV(A). The sequence is that of Lipid A biosynthesis acyltransferase from Haemophilus influenzae (strain ATCC 51907 / DSM 11121 / KW20 / Rd).